We begin with the raw amino-acid sequence, 276 residues long: Rhomboid protease GlpG (276 aa).

Transmembrane regions (helical) follow at residues 94–114, 142–162, 169–189, 192–212, 229–249, and 250–270; these read GPVT…MQIL, ALMH…WYLG, LGSG…GYVQ, FSGP…GYVW, LIIF…GMSM, and ANGA…VDSL. Serine 201 functions as the Nucleophile in the catalytic mechanism. Histidine 254 is a catalytic residue.

It belongs to the peptidase S54 family.

Its subcellular location is the cell inner membrane. The enzyme catalyses Cleaves type-1 transmembrane domains using a catalytic dyad composed of serine and histidine that are contributed by different transmembrane domains.. Functionally, rhomboid-type serine protease that catalyzes intramembrane proteolysis. The protein is Rhomboid protease GlpG of Escherichia fergusonii (strain ATCC 35469 / DSM 13698 / CCUG 18766 / IAM 14443 / JCM 21226 / LMG 7866 / NBRC 102419 / NCTC 12128 / CDC 0568-73).